The following is a 176-amino-acid chain: ATP-dependent protease subunit HslV (176 aa).

Residue Thr5 is part of the active site. Na(+) contacts are provided by Ala161, Cys164, and Thr167.

The protein belongs to the peptidase T1B family. HslV subfamily. In terms of assembly, a double ring-shaped homohexamer of HslV is capped on each side by a ring-shaped HslU homohexamer. The assembly of the HslU/HslV complex is dependent on binding of ATP.

The protein resides in the cytoplasm. The catalysed reaction is ATP-dependent cleavage of peptide bonds with broad specificity.. With respect to regulation, allosterically activated by HslU binding. Protease subunit of a proteasome-like degradation complex believed to be a general protein degrading machinery. This is ATP-dependent protease subunit HslV from Desulforamulus reducens (strain ATCC BAA-1160 / DSM 100696 / MI-1) (Desulfotomaculum reducens).